Reading from the N-terminus, the 554-residue chain is Urocanate hydratase (554 aa).

NAD(+)-binding positions include 49-50, Gln127, 173-175, Glu193, Arg198, 239-240, 260-264, 270-271, and Tyr319; these read GG, GMG, NA, QTSAH, and YI. Residue Cys407 is part of the active site. Gly489 provides a ligand contact to NAD(+).

It belongs to the urocanase family. It depends on NAD(+) as a cofactor.

The protein localises to the cytoplasm. It catalyses the reaction 4-imidazolone-5-propanoate = trans-urocanate + H2O. Its pathway is amino-acid degradation; L-histidine degradation into L-glutamate; N-formimidoyl-L-glutamate from L-histidine: step 2/3. Its function is as follows. Catalyzes the conversion of urocanate to 4-imidazolone-5-propionate. The chain is Urocanate hydratase from Bacillus velezensis (strain DSM 23117 / BGSC 10A6 / LMG 26770 / FZB42) (Bacillus amyloliquefaciens subsp. plantarum).